The following is a 118-amino-acid chain: Probable dihydroneopterin aldolase (118 aa).

Substrate contacts are provided by residues Glu-21, Tyr-53, and Ile-72 to Glu-73. Catalysis depends on Lys-98, which acts as the Proton donor/acceptor.

This sequence belongs to the DHNA family.

It carries out the reaction 7,8-dihydroneopterin = 6-hydroxymethyl-7,8-dihydropterin + glycolaldehyde. The protein operates within cofactor biosynthesis; tetrahydrofolate biosynthesis; 2-amino-4-hydroxy-6-hydroxymethyl-7,8-dihydropteridine diphosphate from 7,8-dihydroneopterin triphosphate: step 3/4. Functionally, catalyzes the conversion of 7,8-dihydroneopterin to 6-hydroxymethyl-7,8-dihydropterin. In Synechocystis sp. (strain ATCC 27184 / PCC 6803 / Kazusa), this protein is Probable dihydroneopterin aldolase (folB).